A 182-amino-acid chain; its full sequence is NADH-quinone oxidoreductase subunit B (182 aa).

[4Fe-4S] cluster is bound by residues cysteine 61, cysteine 62, cysteine 126, and cysteine 156.

The protein belongs to the complex I 20 kDa subunit family. In terms of assembly, NDH-1 is composed of 14 different subunits. Subunits NuoB, C, D, E, F, and G constitute the peripheral sector of the complex. [4Fe-4S] cluster is required as a cofactor.

It is found in the cell inner membrane. It catalyses the reaction a quinone + NADH + 5 H(+)(in) = a quinol + NAD(+) + 4 H(+)(out). Its function is as follows. NDH-1 shuttles electrons from NADH, via FMN and iron-sulfur (Fe-S) centers, to quinones in the respiratory chain. The immediate electron acceptor for the enzyme in this species is believed to be ubiquinone. Couples the redox reaction to proton translocation (for every two electrons transferred, four hydrogen ions are translocated across the cytoplasmic membrane), and thus conserves the redox energy in a proton gradient. The chain is NADH-quinone oxidoreductase subunit B from Xanthomonas oryzae pv. oryzae (strain PXO99A).